A 146-amino-acid polypeptide reads, in one-letter code: Hemoglobin subunit beta (146 aa).

V1 carries the post-translational modification N-acetylvaline. The Globin domain maps to H2–H146. A Phosphothreonine modification is found at T12. The residue at position 44 (S44) is a Phosphoserine. K59 is modified (N6-acetyllysine). H63 provides a ligand contact to heme b. Residue K82 is modified to N6-acetyllysine. Residue H92 coordinates heme b. An S-nitrosocysteine modification is found at C93. Position 144 is an N6-acetyllysine (K144).

It belongs to the globin family. Heterotetramer of two alpha chains and two beta chains. As to expression, red blood cells.

Involved in oxygen transport from the lung to the various peripheral tissues. The sequence is that of Hemoglobin subunit beta from Peromyscus californicus (California mouse).